A 265-amino-acid chain; its full sequence is Isoprenyl transferase (265 aa).

Asp35 is a catalytic residue. Residue Asp35 participates in Mg(2+) binding. Substrate contacts are provided by residues 36–39 (GNGR), Trp40, Arg48, His52, and 80–82 (STE). The Proton acceptor role is filled by Asn83. Substrate is bound by residues Trp84, Arg86, Arg203, and 209-211 (RIS). A Mg(2+)-binding site is contributed by Glu222.

Belongs to the UPP synthase family. In terms of assembly, homodimer. The cofactor is Mg(2+).

Catalyzes the condensation of isopentenyl diphosphate (IPP) with allylic pyrophosphates generating different type of terpenoids. This is Isoprenyl transferase from Prochlorococcus marinus (strain MIT 9313).